Consider the following 230-residue polypeptide: MNYEGKTKIVKVTDDYALLEFKDDITAGDGLKHDVLTGKGSICAETTAILMKYLSEKGIKTHLVEYIPPRTLKVIPLKMFPLEVVVRLKKAGSFVRRYGGVEGEDLPVPLVEFFIKDDERHDPMVCVDHLEILGIATREQAEKMKEAAVKATLALKEFFERANFELWDIKYEFGLDKDGNVVLGDEISPDTFRLRKKGEIFDKDVYRRDLGDPLKKYREVLELCRSLNSQ.

It belongs to the SAICAR synthetase family.

It carries out the reaction 5-amino-1-(5-phospho-D-ribosyl)imidazole-4-carboxylate + L-aspartate + ATP = (2S)-2-[5-amino-1-(5-phospho-beta-D-ribosyl)imidazole-4-carboxamido]succinate + ADP + phosphate + 2 H(+). It participates in purine metabolism; IMP biosynthesis via de novo pathway; 5-amino-1-(5-phospho-D-ribosyl)imidazole-4-carboxamide from 5-amino-1-(5-phospho-D-ribosyl)imidazole-4-carboxylate: step 1/2. The polypeptide is Phosphoribosylaminoimidazole-succinocarboxamide synthase (Thermotoga petrophila (strain ATCC BAA-488 / DSM 13995 / JCM 10881 / RKU-1)).